An 813-amino-acid chain; its full sequence is Probable receptor-like protein kinase At5g39020 (813 aa).

An N-terminal signal peptide occupies residues 1–21; that stretch reads MNCNVLFLLSVLVSVTAGVTA. Residues 22–437 lie on the Extracellular side of the membrane; it reads AYHPTDVFLF…TPPIKGKPHV (416 aa). N-linked (GlcNAc...) asparagine glycans are attached at residues Asn-46, Asn-61, Asn-165, Asn-202, Asn-213, Asn-263, Asn-286, Asn-293, Asn-384, and Asn-401. Residues 438-458 form a helical membrane-spanning segment; the sequence is LVIILIVVGSVIGLATFIVII. Residues 459–813 are Cytoplasmic-facing; that stretch reads MLLIRQMKRK…QTQTLDSTII (355 aa). A Protein kinase domain is found at 496 to 771; it reads KSFSHTVGKG…KVVEMIEGSL (276 aa). Residues 502-510 and Lys-524 contribute to the ATP site; that span reads VGKGGFGTV. The active-site Proton acceptor is Asp-619. The interval 791 to 813 is disordered; that stretch reads ESSSLSDGQEAEKQTQTLDSTII. The span at 804-813 shows a compositional bias: polar residues; it reads QTQTLDSTII.

The protein belongs to the protein kinase superfamily. Ser/Thr protein kinase family.

The protein localises to the membrane. This Arabidopsis thaliana (Mouse-ear cress) protein is Probable receptor-like protein kinase At5g39020.